Reading from the N-terminus, the 154-residue chain is Small ribosomal subunit protein uS19 (154 aa).

This sequence belongs to the universal ribosomal protein uS19 family.

In Oryza sativa subsp. japonica (Rice), this protein is Small ribosomal subunit protein uS19 (RPS15).